The chain runs to 551 residues: Probable 4-coumarate--CoA ligase 2 (551 aa).

Residues Ser-205, Ser-206, Gly-207, Thr-208, Thr-209, and Lys-213 each contribute to the ATP site. Residues Tyr-253 and Thr-257 each coordinate (E)-4-coumaroyl-AMP. Lys-274 contacts CoA. Positions 276 to 346 (EFVRFLDLIQ…RFKGKLIIKQ (71 aa)) are SBD1. Residues Ala-323, Gln-346, Gly-347, and Thr-351 each coordinate (E)-4-coumaroyl-AMP. Positions 346, 347, 351, 430, and 445 each coordinate ATP. Positions 347–409 (GYGATELSPA…IKGPNVMLGY (63 aa)) are SBD2. Residues Lys-447 and Lys-451 each coordinate (E)-4-coumaroyl-AMP. Positions 453 and 454 each coordinate CoA. Lys-537 is a binding site for ATP.

Belongs to the ATP-dependent AMP-binding enzyme family. The cofactor is Mg(2+).

It catalyses the reaction (E)-4-coumarate + ATP + CoA = (E)-4-coumaroyl-CoA + AMP + diphosphate. The enzyme catalyses (E)-4-coumarate + ATP + H(+) = (E)-4-coumaroyl-AMP + diphosphate. The catalysed reaction is (E)-4-coumaroyl-AMP + CoA = (E)-4-coumaroyl-CoA + AMP + H(+). The protein operates within phytoalexin biosynthesis; 3,4',5-trihydroxystilbene biosynthesis; 3,4',5-trihydroxystilbene from trans-4-coumarate: step 1/2. Carboxylate--CoA ligase that may use 4-coumarate as substrate. Follows a two-step reaction mechanism, wherein the carboxylate substrate first undergoes adenylation by ATP, followed by a thioesterification in the presence of CoA to yield the final CoA thioester. The chain is Probable 4-coumarate--CoA ligase 2 (4cl2) from Dictyostelium discoideum (Social amoeba).